A 320-amino-acid polypeptide reads, in one-letter code: AA9 family lytic polysaccharide monooxygenase-like protein CEL1 (320 aa).

A signal peptide spans 1-29 (MRLPSRQQVLKMLATFSLALGLFAAKVQA). Disulfide bonds link cysteine 78/cysteine 199 and cysteine 121/cysteine 126. Histidine 109 provides a ligand contact to Cu(2+). N-linked (GlcNAc...) asparagine glycosylation occurs at asparagine 163. Residues histidine 189 and glutamine 194 each coordinate O2. Tyrosine 196 is a binding site for Cu(2+). A disordered region spans residues 255–284 (GSGGNGGSPTTTPHTTTPITTSPPPTSTPG). Low complexity predominate over residues 262-274 (SPTTTPHTTTPIT). The CBM1 domain maps to 284 to 320 (GTIPQYGQCGGIGWTGGTGCVAPYQCKVINDYYSQCL).

It belongs to the polysaccharide monooxygenase AA9 family. The cofactor is Cu(2+).

It localises to the secreted. The enzyme catalyses [(1-&gt;4)-beta-D-glucosyl]n+m + reduced acceptor + O2 = 4-dehydro-beta-D-glucosyl-[(1-&gt;4)-beta-D-glucosyl]n-1 + [(1-&gt;4)-beta-D-glucosyl]m + acceptor + H2O.. Its function is as follows. Lytic polysaccharide monooxygenase (LPMO)-like protein that binds strongly to cellulose. Seems not to acts as an endoglucanase, a ceUobiohydrolase able to hydrolyze fluorogenic cellobiosides, a /3-glucosidase, a xylanase, nor a cellobiose:quinone oxidoreductase. In Agaricus bisporus (White button mushroom), this protein is AA9 family lytic polysaccharide monooxygenase-like protein CEL1.